A 243-amino-acid chain; its full sequence is Chromosome partition protein MukE (243 aa).

The tract at residues 214-243 (DSLALEKQADLNEVDDNDELEDELDDEEHA) is disordered. A compositionally biased stretch (acidic residues) spans 225-243 (NEVDDNDELEDELDDEEHA).

The protein belongs to the MukE family. As to quaternary structure, interacts, and probably forms a ternary complex, with MukF and MukB. The complex formation is stimulated by calcium or magnesium.

It localises to the cytoplasm. Its subcellular location is the nucleoid. Functionally, involved in chromosome condensation, segregation and cell cycle progression. May participate in facilitating chromosome segregation by condensation DNA from both sides of a centrally located replisome during cell division. Probably acts via its interaction with MukB and MukF. In Pasteurella multocida (strain Pm70), this protein is Chromosome partition protein MukE.